A 49-amino-acid polypeptide reads, in one-letter code: Large ribosomal subunit protein bL33B (49 aa).

Belongs to the bacterial ribosomal protein bL33 family.

The chain is Large ribosomal subunit protein bL33B (rpmG2) from Listeria innocua serovar 6a (strain ATCC BAA-680 / CLIP 11262).